An 816-amino-acid chain; its full sequence is H(+)/Cl(-) exchange transporter 5 (816 aa).

The disordered stretch occupies residues 1–28; it reads MAMWQGAMDNRGFQQGSFNSFQSSSSDE. At 1 to 124 the chain is on the cytoplasmic side; it reads MAMWQGAMDN…WALIHSVSDA (124 aa). Residues 12-25 show a composition bias toward low complexity; that stretch reads GFQQGSFNSFQSSS. 2 consecutive transmembrane segments (helical) span residues 125–162 and 208–231; these read FSGW…ICTE and VNYF…VKVF. The Selectivity filter part_1 motif lies at 237-241; that stretch reads GSGIP. Ser-238 is a chloride binding site. Residues 240–247 constitute an intramembrane region (helical); the sequence is IPEIKTIL. 2 helical membrane-spanning segments follow: residues 256 to 275 and 281 to 300; these read LGKW…VSSG and EGPL…HCFN. Residues 279 to 283 carry the Selectivity filter part_2 motif; it reads GKEGP. 2 consecutive intramembrane regions (helical) follow at residues 312–324 and 328–336; these read VLSA…VSVA and PIGGVLFSL. The next 5 helical transmembrane spans lie at 348–366, 389–414, 422–442, 498–518, and 523–542; these read LWRS…RSIN, LVPF…IAWC, LGKY…ILAF, MWQL…TFGM, and GLFI…LGVG. Residues 523 to 527 carry the Selectivity filter part_3 motif; it reads GLFIP. Phe-525 provides a ligand contact to chloride. Positions 570 to 584 form an intramembrane region, helical; it reads GLYAMVGAAACLGGV. The segment at residues 585-587 is an intramembrane region (note=Loop between two helices); sequence TRM. The helical intramembrane region spans 588 to 599; that stretch reads TVSLVVIMFELT. Residues 600 to 604 constitute an intramembrane region (note=Loop between two helices); that stretch reads GGLEY. A helical membrane pass occupies residues 605–622; the sequence is IVPLMAAAMTSKWVADAL. The Cytoplasmic portion of the chain corresponds to 623 to 816; the sequence is GREGIYDAHI…NQDPDSILFN (194 aa). Position 628 (Tyr-628) interacts with chloride. CBS domains are found at residues 656 to 720 and 752 to 812; these read MKPR…ARKK and ILDL…DPDS. ATP-binding positions include Thr-666, 687-689, and 794-797; these read YSG and TKKD.

It belongs to the chloride channel (TC 2.A.49) family. ClC-5/CLCN5 subfamily. As to quaternary structure, interacts with NEDD4 and NEDD4L. Post-translationally, ubiquitinated by NEDD4L in the presence of albumin; which promotes endocytosis and proteasomal degradation.

It is found in the golgi apparatus membrane. The protein localises to the endosome membrane. Its subcellular location is the cell membrane. The enzyme catalyses 2 chloride(in) + H(+)(out) = 2 chloride(out) + H(+)(in). Functionally, proton-coupled chloride transporter. Functions as antiport system and exchanges chloride ions against protons. Important for normal acidification of the endosome lumen. May play an important role in renal tubular function. The CLC channel family contains both chloride channels and proton-coupled anion transporters that exchange chloride or another anion for protons. The absence of conserved gating glutamate residues is typical for family members that function as channels. In Sus scrofa (Pig), this protein is H(+)/Cl(-) exchange transporter 5 (CLCN5).